A 254-amino-acid chain; its full sequence is Triosephosphate isomerase (254 aa).

Position 9 to 11 (9 to 11 (NWK)) interacts with substrate. The active-site Electrophile is His-96. Glu-169 (proton acceptor) is an active-site residue. Substrate is bound by residues Gly-175, Ser-215, and 236–237 (GG).

The protein belongs to the triosephosphate isomerase family. Homodimer.

The protein localises to the cytoplasm. It carries out the reaction D-glyceraldehyde 3-phosphate = dihydroxyacetone phosphate. Its pathway is carbohydrate biosynthesis; gluconeogenesis. The protein operates within carbohydrate degradation; glycolysis; D-glyceraldehyde 3-phosphate from glycerone phosphate: step 1/1. In terms of biological role, involved in the gluconeogenesis. Catalyzes stereospecifically the conversion of dihydroxyacetone phosphate (DHAP) to D-glyceraldehyde-3-phosphate (G3P). The polypeptide is Triosephosphate isomerase (Borrelia duttonii (strain Ly)).